Here is a 338-residue protein sequence, read N- to C-terminus: Glycerol-3-phosphate dehydrogenase [NAD(P)+] (338 aa).

Positions 13, 14, and 108 each coordinate NADPH. Sn-glycerol 3-phosphate contacts are provided by Lys108, Gly139, and Ser141. Ala143 is an NADPH binding site. The sn-glycerol 3-phosphate site is built by Lys194, Asp247, Ser257, Arg258, and Asn259. Residue Lys194 is the Proton acceptor of the active site. Residue Arg258 participates in NADPH binding. Positions 282 and 284 each coordinate NADPH.

Belongs to the NAD-dependent glycerol-3-phosphate dehydrogenase family.

It localises to the cytoplasm. The catalysed reaction is sn-glycerol 3-phosphate + NAD(+) = dihydroxyacetone phosphate + NADH + H(+). The enzyme catalyses sn-glycerol 3-phosphate + NADP(+) = dihydroxyacetone phosphate + NADPH + H(+). The protein operates within membrane lipid metabolism; glycerophospholipid metabolism. Its function is as follows. Catalyzes the reduction of the glycolytic intermediate dihydroxyacetone phosphate (DHAP) to sn-glycerol 3-phosphate (G3P), the key precursor for phospholipid synthesis. In Streptococcus pyogenes serotype M28 (strain MGAS6180), this protein is Glycerol-3-phosphate dehydrogenase [NAD(P)+].